A 132-amino-acid polypeptide reads, in one-letter code: MKGLGSTIVRSLPNGARLVCADNTGAKELEIIAVKNYTGTVRRLPAGGVGHMVFVSVKKGTPEMRKQVLPAIIIRQKKEYKRADGTRVKFEDNAAVIVTPEGTPKGSEIKGPVSKEAAERWPGVSRLAKIIH.

This sequence belongs to the universal ribosomal protein uL14 family. As to quaternary structure, part of the 50S ribosomal subunit. Forms a cluster with proteins L3 and L24e, part of which may contact the 16S rRNA in 2 intersubunit bridges.

In terms of biological role, binds to 23S rRNA. Forms part of two intersubunit bridges in the 70S ribosome. The protein is Large ribosomal subunit protein uL14 of Methanococcus maripaludis (strain C7 / ATCC BAA-1331).